An 87-amino-acid polypeptide reads, in one-letter code: UPF0147 protein AF_2370.1 (87 aa).

This sequence belongs to the UPF0147 family.

The chain is UPF0147 protein AF_2370.1 from Archaeoglobus fulgidus (strain ATCC 49558 / DSM 4304 / JCM 9628 / NBRC 100126 / VC-16).